An 84-amino-acid polypeptide reads, in one-letter code: Putative antitoxin RelB4 (84 aa).

Functionally, antitoxin component of a type II toxin-antitoxin (TA) system. Its cognate toxin is RelE4 (Potential). The polypeptide is Putative antitoxin RelB4 (relB4) (Methanocaldococcus jannaschii (strain ATCC 43067 / DSM 2661 / JAL-1 / JCM 10045 / NBRC 100440) (Methanococcus jannaschii)).